The primary structure comprises 85 residues: RNA-binding protein Hfq (85 aa).

In terms of domain architecture, Sm spans 9–68 (DPFLNELRKEKVPVSVFLVNGIKLHGIIDSFDQYVVMLKNSITQMVYKHAISTVVPSRMV).

The protein belongs to the Hfq family. In terms of assembly, homohexamer.

In terms of biological role, RNA chaperone that binds small regulatory RNA (sRNAs) and mRNAs to facilitate mRNA translational regulation in response to envelope stress, environmental stress and changes in metabolite concentrations. Also binds with high specificity to tRNAs. The polypeptide is RNA-binding protein Hfq (Legionella pneumophila (strain Paris)).